Here is a 478-residue protein sequence, read N- to C-terminus: Cytochrome c-552 (478 aa).

Residues 1–26 (MARKTLRARRFFSLIFPFFFITSVYA) form the signal peptide. H94 is a heme c binding site. The heme site is built by C122, C125, and K126. Residues C160, C163, H164, C209, C212, and H213 each contribute to the heme c site. E215, Y216, K261, and Q263 together coordinate Ca(2+). A substrate-binding site is contributed by Y216. Substrate is bound at residue H264. Residues H275, C282, C285, H286, H301, C314, C317, H318, and H393 each contribute to the heme c site.

The protein belongs to the cytochrome c-552 family. It depends on Ca(2+) as a cofactor. Requires heme c as cofactor.

It is found in the periplasm. It catalyses the reaction 6 Fe(III)-[cytochrome c] + NH4(+) + 2 H2O = 6 Fe(II)-[cytochrome c] + nitrite + 8 H(+). Its pathway is nitrogen metabolism; nitrate reduction (assimilation). Catalyzes the reduction of nitrite to ammonia, consuming six electrons in the process. The protein is Cytochrome c-552 of Salmonella typhi.